We begin with the raw amino-acid sequence, 206 residues long: uncharacterized protein (206 aa).

The helical transmembrane segment at 21–43 threads the bilayer; that stretch reads VPINITMSICALTALLKSYSITG.

The protein localises to the membrane. This is an uncharacterized protein from Acanthamoeba polyphaga (Amoeba).